Here is a 410-residue protein sequence, read N- to C-terminus: Gamma-glutamyl phosphate reductase (410 aa).

The protein belongs to the gamma-glutamyl phosphate reductase family.

The protein resides in the cytoplasm. The enzyme catalyses L-glutamate 5-semialdehyde + phosphate + NADP(+) = L-glutamyl 5-phosphate + NADPH + H(+). The protein operates within amino-acid biosynthesis; L-proline biosynthesis; L-glutamate 5-semialdehyde from L-glutamate: step 2/2. Functionally, catalyzes the NADPH-dependent reduction of L-glutamate 5-phosphate into L-glutamate 5-semialdehyde and phosphate. The product spontaneously undergoes cyclization to form 1-pyrroline-5-carboxylate. This chain is Gamma-glutamyl phosphate reductase, found in Sulfurimonas denitrificans (strain ATCC 33889 / DSM 1251) (Thiomicrospira denitrificans (strain ATCC 33889 / DSM 1251)).